A 1167-amino-acid polypeptide reads, in one-letter code: ATP-dependent helicase/nuclease subunit A (1167 aa).

The 450-residue stretch at 2–451 folds into the UvrD-like helicase ATP-binding domain; that stretch reads KNWTAEQMRA…IELSLNFRSR (450 aa). 23–30 serves as a coordination point for ATP; it reads AAAGAGKT. The UvrD-like helicase C-terminal domain maps to 478-768; that stretch reads KAFLKKGADY…RVMSVHKSKG (291 aa).

It belongs to the helicase family. AddA subfamily. As to quaternary structure, heterodimer of AddA and AddB/RexB. Requires Mg(2+) as cofactor.

It catalyses the reaction Couples ATP hydrolysis with the unwinding of duplex DNA by translocating in the 3'-5' direction.. It carries out the reaction ATP + H2O = ADP + phosphate + H(+). In terms of biological role, the heterodimer acts as both an ATP-dependent DNA helicase and an ATP-dependent, dual-direction single-stranded exonuclease. Recognizes the chi site generating a DNA molecule suitable for the initiation of homologous recombination. The AddA nuclease domain is required for chi fragment generation; this subunit has the helicase and 3' -&gt; 5' nuclease activities. The chain is ATP-dependent helicase/nuclease subunit A from Carboxydothermus hydrogenoformans (strain ATCC BAA-161 / DSM 6008 / Z-2901).